The following is a 419-amino-acid chain: Probable G-protein coupled receptor 63 (419 aa).

At 1-81 the chain is on the extracellular side; it reads MVFSAVLTAF…AFKSLNLPLQ (81 aa). N-linked (GlcNAc...) asparagine glycosylation is found at N16, N28, and N62. Residues 82-104 traverse the membrane as a helical segment; sequence ITLSAIMIFILFVSFLGNLVVCL. The Cytoplasmic portion of the chain corresponds to 105 to 115; it reads MVYQKAAMRSA. A helical membrane pass occupies residues 116-138; that stretch reads INILLASLAFADMLLAVLNMPFA. The Extracellular portion of the chain corresponds to 139–157; the sequence is LVTILTTRWIFGKFFCRVS. Residues 158-177 traverse the membrane as a helical segment; it reads AMFFWLFVIEGVAILLIISI. Over 178-196 the chain is Cytoplasmic; it reads DRFLIIVQRQDKLNPYRAK. A helical transmembrane segment spans residues 197 to 216; the sequence is VLIAVSWATSFCVAFPLAVG. The Extracellular segment spans residues 217–240; it reads NPDLQIPSRAPQCVFGYTTNPGYQ. A helical transmembrane segment spans residues 241 to 263; it reads AYVILISLISFFIPFLVILYSFM. At 264-315 the chain is on the cytoplasmic side; it reads GILNTLRHNALRIHSYPEGICLSQASKLGLMSLQRPFQMSIDMGFKTRAFTT. A helical transmembrane segment spans residues 316 to 338; the sequence is ILILFAVFIVCWAPFTTYSLVAT. The Extracellular segment spans residues 339–352; that stretch reads FSKHFYYQHNFFEI. A helical transmembrane segment spans residues 353-375; the sequence is STWLLWLCYLKSALNPLIYYWRI. Residues 376–419 lie on the Cytoplasmic side of the membrane; that stretch reads KKFHDACLDMMPKSFKFLPQLPGHTKRRIRPSAVYVCGEHRTVV.

It belongs to the G-protein coupled receptor 1 family. As to expression, expressed in brain; detected in the frontal cortex, with lower levels in the thalamus, caudate, hypothalamus and midbrain.

The protein resides in the cell membrane. Orphan receptor. May play a role in brain function. The polypeptide is Probable G-protein coupled receptor 63 (GPR63) (Homo sapiens (Human)).